A 400-amino-acid chain; its full sequence is Cytohesin-2 (400 aa).

Residues 10-63 adopt a coiled-coil conformation; it reads DLTPEERMELENIRRRKQELLVEIQRLREELSEAMSEVEGLEANEGSKTLQRNR. An SEC7 domain is found at 72–201; the sequence is FNMDPKKGIQ…VIMLNTSLHN (130 aa). A PH domain is found at 259 to 376; it reads NPDREGWLLK…WIKSIQAAVS (118 aa). A 1,2-diacyl-sn-glycero-3-phospho-(1D-myo-inositol-3,4,5-trisphosphate) is bound by residues 268–276, arginine 280, tyrosine 291, arginine 301, lysine 339, asparagine 350, and histidine 351; that span reads KLGGGRVKT. The interval 387–395 is C-terminal autoinhibitory region; it reads RKKRISVKK.

In terms of assembly, heteromer. Composed of TAMALIN, CYTH2 and at least one GRM1. Interacts with ARRB1. Interacts with ARL4D; the interaction is direct. Directly interacts with CCDC120 through the coiled coil domain; this interaction stabilizes CCDC120, possibly by preventing its ubiquitination, and is required for neurite growth in neuroblastoma cells. Interacts with ARF1. Interacts with FRMD4A. Interacts (via N-terminal domain) with INAVA (via N-terminal domain). Widely expressed.

It is found in the cell membrane. The protein resides in the cytoplasm. Its subcellular location is the cell projection. The protein localises to the growth cone. It localises to the cell junction. It is found in the tight junction. The protein resides in the adherens junction. Functionally, acts as a guanine-nucleotide exchange factor (GEF). Promotes guanine-nucleotide exchange on ARF1, ARF3 and ARF6. Activates ARF factors through replacement of GDP with GTP. The cell membrane form, in association with ARL4 proteins, recruits ARF6 to the plasma membrane. Involved in neurite growth. The chain is Cytohesin-2 from Homo sapiens (Human).